A 679-amino-acid polypeptide reads, in one-letter code: tRNA uridine 5-carboxymethylaminomethyl modification enzyme MnmG (679 aa).

15–20 (GAGHAG) serves as a coordination point for FAD. 314 to 328 (GPRYCPSIEDKIVRF) lines the NAD(+) pocket.

Belongs to the MnmG family. Homodimer. Heterotetramer of two MnmE and two MnmG subunits. FAD serves as cofactor.

The protein resides in the cytoplasm. Functionally, NAD-binding protein involved in the addition of a carboxymethylaminomethyl (cmnm) group at the wobble position (U34) of certain tRNAs, forming tRNA-cmnm(5)s(2)U34. In Roseiflexus sp. (strain RS-1), this protein is tRNA uridine 5-carboxymethylaminomethyl modification enzyme MnmG.